The following is a 1342-amino-acid chain: DNA-directed RNA polymerase subunit beta (1342 aa).

Belongs to the RNA polymerase beta chain family. The RNAP catalytic core consists of 2 alpha, 1 beta, 1 beta' and 1 omega subunit. When a sigma factor is associated with the core the holoenzyme is formed, which can initiate transcription.

The enzyme catalyses RNA(n) + a ribonucleoside 5'-triphosphate = RNA(n+1) + diphosphate. DNA-dependent RNA polymerase catalyzes the transcription of DNA into RNA using the four ribonucleoside triphosphates as substrates. In Citrobacter koseri (strain ATCC BAA-895 / CDC 4225-83 / SGSC4696), this protein is DNA-directed RNA polymerase subunit beta.